The sequence spans 296 residues: Tuberculosinyl adenosine transferase (296 aa).

Belongs to the diterpene synthase family. In terms of assembly, homodimer. Mg(2+) serves as cofactor.

It carries out the reaction tuberculosinyl diphosphate + adenosine + H(+) = 1-tuberculosinyladenosine + diphosphate. The catalysed reaction is tuberculosinyl diphosphate + H2O = tuberculosinol + diphosphate. It catalyses the reaction tuberculosinyl diphosphate + H2O = (13R)-edaxadiene + diphosphate. The enzyme catalyses tuberculosinyl diphosphate + H2O = (13S)-edaxadiene + diphosphate. Functionally, tuberculosinyl transferase that catalyzes the condensation of adenosine and tuberculosinyl diphosphate (TbPP) to generate 1-tuberculosinyladenosine (1-TbAd), which acts as an antiacid that directly protects M.tuberculosis from acid pH and physically remodels M.tuberculosis phagolysosomes. In addition, acts as a phosphatase that catalyzes the diphosphate-removal from TbPP to produce both tuberculosinol (TOH) and isotuberculosinol (iso-TOH). The chain is Tuberculosinyl adenosine transferase from Mycobacterium tuberculosis (strain CDC 1551 / Oshkosh).